The sequence spans 92 residues: Large ribosomal subunit protein eL43z (92 aa).

A C4-type zinc finger spans residues 39-60 (CEFCGKYSVKRKVVGIWGCKDC).

It belongs to the eukaryotic ribosomal protein eL43 family.

In Arabidopsis thaliana (Mouse-ear cress), this protein is Large ribosomal subunit protein eL43z (RPL37AB).